Reading from the N-terminus, the 75-residue chain is Peptide Ctri10036 (75 aa).

The N-terminal stretch at M1–G22 is a signal peptide. At K41 the chain carries Lysine amide. Residues E47–Y75 constitute a propeptide that is removed on maturation.

Belongs to the non-disulfide-bridged peptide (NDBP) superfamily. Short antimicrobial peptide (group 4) family. In terms of tissue distribution, expressed by the venom gland.

The protein localises to the secreted. This chain is Peptide Ctri10036, found in Chaerilus tricostatus (Scorpion).